Reading from the N-terminus, the 439-residue chain is GTPase Obg (439 aa).

The 160-residue stretch at G3–L162 folds into the Obg domain. An OBG-type G domain is found at A163–R333. Residues G169–S176, F194–Q198, D215–G218, N285–D288, and S314–A316 each bind GTP. Mg(2+)-binding residues include S176 and T196. The 78-residue stretch at V351–D428 folds into the OCT domain.

Belongs to the TRAFAC class OBG-HflX-like GTPase superfamily. OBG GTPase family. Monomer. Mg(2+) serves as cofactor.

Its subcellular location is the cytoplasm. Functionally, an essential GTPase which binds GTP, GDP and possibly (p)ppGpp with moderate affinity, with high nucleotide exchange rates and a fairly low GTP hydrolysis rate. Plays a role in control of the cell cycle, stress response, ribosome biogenesis and in those bacteria that undergo differentiation, in morphogenesis control. In Roseiflexus castenholzii (strain DSM 13941 / HLO8), this protein is GTPase Obg.